We begin with the raw amino-acid sequence, 230 residues long: 7-cyano-7-deazaguanine synthase (230 aa).

Position 8-18 (8-18 (LSGGMDSAVVT)) interacts with ATP. Residues C186, C196, C199, and C202 each contribute to the Zn(2+) site.

Belongs to the QueC family. It depends on Zn(2+) as a cofactor.

It carries out the reaction 7-carboxy-7-deazaguanine + NH4(+) + ATP = 7-cyano-7-deazaguanine + ADP + phosphate + H2O + H(+). Its pathway is purine metabolism; 7-cyano-7-deazaguanine biosynthesis. Catalyzes the ATP-dependent conversion of 7-carboxy-7-deazaguanine (CDG) to 7-cyano-7-deazaguanine (preQ(0)). The polypeptide is 7-cyano-7-deazaguanine synthase (Xylella fastidiosa (strain 9a5c)).